Consider the following 201-residue polypeptide: L(+)-tartrate dehydratase subunit beta (201 aa).

The active site involves H37.

It belongs to the class-I fumarase family. Heterotetramer of two alpha and two beta subunits.

The enzyme catalyses (2R,3R)-tartrate = oxaloacetate + H2O. This is L(+)-tartrate dehydratase subunit beta (ttdB) from Escherichia coli O6:K15:H31 (strain 536 / UPEC).